The chain runs to 626 residues: DEAD-box ATP-dependent RNA helicase 16 (626 aa).

Positions 1–48 (MGKTKLKPVEDVNSEVVDEVEKAEEVEEQRNDREQEEEQKEEEAPKSF) are disordered. Residues 9–47 (VEDVNSEVVDEVEKAEEVEEQRNDREQEEEQKEEEAPKS) are a coiled coil. The segment covering 12–27 (VNSEVVDEVEKAEEVE) has biased composition (acidic residues). A Q motif motif is present at residues 46 to 74 (KSFEELGLDSRLIRALTKKGIEKPTLIQQ). In terms of domain architecture, Helicase ATP-binding spans 77-259 (IPYILEGKDV…KLILHNPIVL (183 aa)). Residue 90 to 97 (AKTGSGKT) coordinates ATP. Residues 207 to 210 (DEAD) carry the DEAD box motif. The 185-residue stretch at 293–477 (ALLKLEVVQK…PFPLLTENAV (185 aa)) folds into the Helicase C-terminal domain. Residues 356–385 (IATDDNSQTKKQKEEAKGEANKENKKNNKR) adopt a coiled-coil conformation. Residues 363-381 (QTKKQKEEAKGEANKENKK) show a composition bias toward basic and acidic residues. 2 disordered regions span residues 363–388 (QTKK…RSKP) and 568–626 (AMGN…QKTV).

This sequence belongs to the DEAD box helicase family. DDX56/DBP9 subfamily.

It carries out the reaction ATP + H2O = ADP + phosphate + H(+). The polypeptide is DEAD-box ATP-dependent RNA helicase 16 (RH16) (Arabidopsis thaliana (Mouse-ear cress)).